The primary structure comprises 210 residues: Large ribosomal subunit protein bL25 (210 aa).

The tract at residues I186 to S210 is disordered. The segment covering N198–S210 has biased composition (low complexity).

Belongs to the bacterial ribosomal protein bL25 family. CTC subfamily. Part of the 50S ribosomal subunit; part of the 5S rRNA/L5/L18/L25 subcomplex. Contacts the 5S rRNA. Binds to the 5S rRNA independently of L5 and L18.

In terms of biological role, this is one of the proteins that binds to the 5S RNA in the ribosome where it forms part of the central protuberance. The polypeptide is Large ribosomal subunit protein bL25 (Ehrlichia chaffeensis (strain ATCC CRL-10679 / Arkansas)).